A 401-amino-acid chain; its full sequence is Large ribosomal subunit protein uL4B (401 aa).

Residues 351–373 (IKAKEKKPDDGKPKAKKPLDAKT) are compositionally biased toward basic and acidic residues. Positions 351–401 (IKAKEKKPDDGKPKAKKPLDAKTKMIKLAKAKKRQARAEAKTAEAKTAESK) are disordered. Positions 374-385 (KMIKLAKAKKRQ) are enriched in basic residues. Basic and acidic residues predominate over residues 386–401 (ARAEAKTAEAKTAESK).

It belongs to the universal ribosomal protein uL4 family. As to quaternary structure, component of the large ribosomal subunit.

It localises to the cytoplasm. In terms of biological role, component of the large ribosomal subunit. The ribosome is a large ribonucleoprotein complex responsible for the synthesis of proteins in the cell. The polypeptide is Large ribosomal subunit protein uL4B (rpl4-b) (Xenopus laevis (African clawed frog)).